A 311-amino-acid polypeptide reads, in one-letter code: Olfactory receptor 2A5 (311 aa).

Over 1-24 (MTKNQTWVTEFILLGFPLSLRIQM) the chain is Extracellular. The N-linked (GlcNAc...) asparagine glycan is linked to Asn-4. The helical transmembrane segment at 25-48 (LLSGLFSLLYVFTLLGNGAILGLI) threads the bilayer. Over 49–56 (WLDSRLHT) the chain is Cytoplasmic. The chain crosses the membrane as a helical span at residues 57-78 (PMYFFLSHLAIIDISYASNNVP). The Extracellular portion of the chain corresponds to 79 to 100 (KMLTNLGLNKRKTISFVPCTMQ). Cysteines 97 and 189 form a disulfide. Residues 101–120 (TFLYMAFAHTECLILVMMSY) traverse the membrane as a helical segment. Over 121-139 (DRYMAICHPLQYSVIMRWG) the chain is Cytoplasmic. Residues 140–158 (VCTVLAVTSWACGSLLALV) traverse the membrane as a helical segment. Topologically, residues 159–196 (HVVLILRLPFCGPHEINHFFCEILSVLKLACADTWLNQ) are extracellular. The helical transmembrane segment at 197-219 (VVIFAASVFILVGPLCLVLVSYS) threads the bilayer. Topologically, residues 220–236 (RILAAILRIQSGEGRRK) are cytoplasmic. A helical transmembrane segment spans residues 237–259 (AFSTCSSHLCMVGLFFGSAIVMY). The Extracellular portion of the chain corresponds to 260-272 (MAPKSRHPEEQQK). Residues 273–292 (VLSLFYSLFNPMLNPLIYSL) form a helical membrane-spanning segment. The Cytoplasmic portion of the chain corresponds to 293–311 (RNAEVKGALKRVLWKQRSK).

The protein belongs to the G-protein coupled receptor 1 family.

It localises to the cell membrane. Odorant receptor. This Homo sapiens (Human) protein is Olfactory receptor 2A5 (OR2A5).